Here is a 423-residue protein sequence, read N- to C-terminus: Polyglutamylase complex subunit TTLL1 (423 aa).

Residues 1–367 (MAGKVKWVTD…NGEIPDCKWN (367 aa)) form the TTL domain. Residues lysine 138, 144–145 (QG), 181–184 (SLYI), and 194–196 (KFD) contribute to the ATP site. Glutamine 144 lines the a protein pocket. Arginine 220 lines the L-glutamate pocket. Residue 241–242 (TN) coordinates ATP. Residue lysine 259 participates in L-glutamate binding. Aspartate 313, glutamate 326, and asparagine 328 together coordinate Mg(2+). Residue lysine 344 participates in L-glutamate binding. The segment at 391–423 (GAERELRSRPGQSLGPKGSRLRDAGRTVLTTWK) is disordered.

The protein belongs to the tubulin polyglutamylase family. In terms of assembly, part of the neuronal tubulin polyglutamylase complex which contains TPGS1, TPGS2, TTLL1, LRRC49 and NICN1. Interacts with PCM1, CSTPP1 and LRRC49. Requires Mg(2+) as cofactor.

It is found in the cytoplasm. It localises to the cytoskeleton. The protein resides in the cilium basal body. The protein localises to the cilium axoneme. Its subcellular location is the cell projection. It is found in the cilium. It localises to the flagellum. The catalysed reaction is (L-glutamyl)(n)-gamma-L-glutamyl-L-glutamyl-[protein] + L-glutamate + ATP = (L-glutamyl)(n+1)-gamma-L-glutamyl-L-glutamyl-[protein] + ADP + phosphate + H(+). Functionally, catalytic subunit of a polyglutamylase complex which modifies tubulin, generating side chains of glutamate on the gamma-carboxyl group of specific glutamate residues within the C-terminal tail of tubulin. Probably involved in the side-chain elongation step of the polyglutamylation reaction rather than the initiation step. Modifies both alpha- and beta-tubulins with a preference for the alpha-tail. Unlike most polyglutamylases of the tubulin--tyrosine ligase family, only displays a catalytic activity when in complex with other proteins as it is most likely lacking domains important for autonomous activity. Part of the neuronal tubulin polyglutamylase complex. Mediates cilia and flagella polyglutamylation which is essential for their biogenesis and motility. Involved in respiratory motile cilia function through the regulation of beating asymmetry. Essential for sperm flagella biogenesis, motility and male fertility. Involved in KLF4 glutamylation which impedes its ubiquitination, thereby leading to somatic cell reprogramming, pluripotency maintenance and embryogenesis. The polypeptide is Polyglutamylase complex subunit TTLL1 (TTLL1) (Bos taurus (Bovine)).